Consider the following 115-residue polypeptide: Skin calcitonin gene-related peptide (115 aa).

An N-terminal signal peptide occupies residues Met1–Ala25. Residues Ala26–Arg69 constitute a propeptide, removed in mature form by a carboxypeptidase. The cysteines at positions 71 and 76 are disulfide-linked. A Phenylalanine amide modification is found at Phe106. The propeptide at Gly107 to Val115 is removed in mature form by an endoprotease.

Skin, intestine and brain.

It is found in the secreted. CGRP induces vasodilation. It dilates a variety of vessels including the coronary, cerebral and systemic vasculature. Its abundance in the CNS also points toward a neurotransmitter or neuromodulator role. The protein is Skin calcitonin gene-related peptide of Phyllomedusa bicolor (Two-colored leaf frog).